The following is a 72-amino-acid chain: Large ribosomal subunit protein uL29 (72 aa).

It belongs to the universal ribosomal protein uL29 family.

The protein is Large ribosomal subunit protein uL29 of Prochlorococcus marinus (strain MIT 9215).